The sequence spans 258 residues: UPF0246 protein VV0659 (258 aa).

The protein belongs to the UPF0246 family.

This is UPF0246 protein VV0659 from Vibrio vulnificus (strain YJ016).